Consider the following 199-residue polypeptide: Biogenesis of lysosome-related organelles complex 1 subunit 3 (199 aa).

Basic residues predominate over residues 1 to 11; sequence MASQSRRRRPL. The interval 1 to 81 is disordered; the sequence is MASQSRRRRP…AAPRDLPPLV (81 aa). Over residues 23-38 the composition is skewed to acidic residues; the sequence is AETDSELSASSEEEEL. The segment covering 39 to 54 has biased composition (low complexity); that stretch reads YLGPSGPTRGRPTGLR. Thr-62 is subject to Phosphothreonine. Ser-64 is modified (phosphoserine).

It belongs to the BLOC1S3 family. Component of the biogenesis of lysosome-related organelles complex 1 (BLOC-1) composed of BLOC1S1, BLOC1S2, BLOC1S3, BLOC1S4, BLOC1S5, BLOC1S6, DTNBP1/BLOC1S7 and SNAPIN/BLOC1S8. Octamer composed of one copy each BLOC1S1, BLOC1S2, BLOC1S3, BLOC1S4, BLOC1S5, BLOC1S6, DTNBP1/BLOC1S7 and SNAPIN/BLOC1S8. The BLOC-1 complex associates with the AP-3 protein complex and membrane protein cargos. Interacts directly with BLOC1S2. Interacts with BLOC1S4, BLOC1S5 and BLOC1S6. Post-translationally, phosphorylated.

Its subcellular location is the cytoplasm. Functionally, component of the BLOC-1 complex, a complex that is required for normal biogenesis of lysosome-related organelles (LRO), such as platelet dense granules and melanosomes. In concert with the AP-3 complex, the BLOC-1 complex is required to target membrane protein cargos into vesicles assembled at cell bodies for delivery into neurites and nerve terminals. The BLOC-1 complex, in association with SNARE proteins, is also proposed to be involved in neurite extension. Plays a role in intracellular vesicle trafficking. The chain is Biogenesis of lysosome-related organelles complex 1 subunit 3 (BLOC1S3) from Sus scrofa (Pig).